Here is a 668-residue protein sequence, read N- to C-terminus: Type II methyltransferase M.MwoI (668 aa).

This sequence belongs to the N(4)/N(6)-methyltransferase family. N(4) subfamily.

It catalyses the reaction a 2'-deoxycytidine in DNA + S-adenosyl-L-methionine = an N(4)-methyl-2'-deoxycytidine in DNA + S-adenosyl-L-homocysteine + H(+). A beta subtype methylase, recognizes the double-stranded DNA sequence 5'-GCNNNNNNNGC-3', methylates C-2 on both strands, and protects the DNA from cleavage by the MwoI endonuclease. In Methanothermobacter wolfeii (Methanobacterium wolfei), this protein is Type II methyltransferase M.MwoI.